The sequence spans 387 residues: MEQVVIVDAIRTPMGRSKGGAFRNVRAEDLSAHLMRSLLARNPALEAAALDDIYWGCVQQTLEQGFNIARNAALLAEVPHSVPAVTVNRLCGSSMQALHDAARMIMTGDAQACLVGGVEHMGHVPMSHGVDFHPGLSRNVAKAAGMMGLTAEMLARMHGISREMQDAFAARSHARAWAATQSAAFKNEIIPTGGHDADGVLKQFNYDEVIRPETTVEALATLRPAFDPVNGTVTAGTSSALSDGAAAMLVMSESRAHELGLKPRARVRSMAVVGCDPSIMGYGPVPASKLALKKAGLSVSDIGVFEMNEAFAAQILPCIKDLGLIEQIDEKINLNGGAIALGHPLGCSGARISTTLLNLMEHKDVQFGLATMCIGLGQGIATVFERV.

Cys91 functions as the Acyl-thioester intermediate in the catalytic mechanism. Catalysis depends on proton acceptor residues His343 and Cys373.

This sequence belongs to the thiolase-like superfamily. Thiolase family. In terms of assembly, heterotetramer of two alpha chains (FadB) and two beta chains (FadA).

It localises to the cytoplasm. The catalysed reaction is an acyl-CoA + acetyl-CoA = a 3-oxoacyl-CoA + CoA. It functions in the pathway lipid metabolism; fatty acid beta-oxidation. Its function is as follows. Catalyzes the final step of fatty acid oxidation in which acetyl-CoA is released and the CoA ester of a fatty acid two carbons shorter is formed. This is 3-ketoacyl-CoA thiolase from Shigella dysenteriae serotype 1 (strain Sd197).